We begin with the raw amino-acid sequence, 162 residues long: NADH-quinone oxidoreductase subunit I (162 aa).

2 4Fe-4S ferredoxin-type domains span residues 53-83 (LRRY…IEAE) and 93-122 (TRYD…EGPN). [4Fe-4S] cluster is bound by residues Cys63, Cys66, Cys69, Cys73, Cys102, Cys105, Cys108, and Cys112.

The protein belongs to the complex I 23 kDa subunit family. In terms of assembly, NDH-1 is composed of 14 different subunits. Subunits NuoA, H, J, K, L, M, N constitute the membrane sector of the complex. Requires [4Fe-4S] cluster as cofactor.

It localises to the cell inner membrane. It catalyses the reaction a quinone + NADH + 5 H(+)(in) = a quinol + NAD(+) + 4 H(+)(out). In terms of biological role, NDH-1 shuttles electrons from NADH, via FMN and iron-sulfur (Fe-S) centers, to quinones in the respiratory chain. The immediate electron acceptor for the enzyme in this species is believed to be ubiquinone. Couples the redox reaction to proton translocation (for every two electrons transferred, four hydrogen ions are translocated across the cytoplasmic membrane), and thus conserves the redox energy in a proton gradient. The chain is NADH-quinone oxidoreductase subunit I from Sphingopyxis alaskensis (strain DSM 13593 / LMG 18877 / RB2256) (Sphingomonas alaskensis).